The chain runs to 166 residues: MYHPVVQVLIGLILVIILILGFYHLKKKSCKTDTDCKDNGHHCVRGTCTDISCLEAVKQDIKGINLDPSIRSCNYTPGFYTFNSTTADLQSPFGKTRIYYGDVYATWSSVDYCQSLCLQHNGCIAWEFDDEKESPGQGSCYFYTNSHPALKNSNDTTIMGIARNIL.

Residues 1 to 4 (MYHP) are Intravirion-facing. The chain crosses the membrane as a helical span at residues 5-25 (VVQVLIGLILVIILILGFYHL). The Virion surface segment spans residues 26–166 (KKKSCKTDTD…TIMGIARNIL (141 aa)).

It belongs to the asfivirus envelope protein p22 family.

The protein resides in the virion membrane. The protein localises to the host cell membrane. This is Putative membrane protein 164 from Ornithodoros (relapsing fever ticks).